The chain runs to 369 residues: Tsukushi (369 aa).

The N-terminal stretch at Met-1–Thr-19 is a signal peptide. In terms of domain architecture, LRRNT spans Lys-20–Leu-60. 11 LRR repeats span residues Asp-61–Thr-81, Thr-87–Arg-108, Tyr-111–Ser-132, Pro-134–Ser-155, Pro-161–Ser-181, Asn-184–Pro-205, Leu-206–Gly-226, Gly-229–Ser-248, Ala-254–Gly-276, Ser-279–Tyr-300, and Ser-303–Gln-323. Asn-76 is a glycosylation site (N-linked (GlcNAc...) asparagine). Asn-189 is a glycosylation site (N-linked (GlcNAc...) asparagine). Asn-284 carries N-linked (GlcNAc...) asparagine glycosylation.

In terms of assembly, forms a ternary complex with chordin/CHRD and BMP4. Interacts with FZD4 (via FZ domain); competes with WNT2B for binding to FZD4, inhibiting Wnt signaling and repressing peripheral eye development. Interacts with BMP4; shows stronger interaction with BMP4 than isoform 2. Interacts with DVR1/VG1; the interaction is inhibited by BMP4. Interacts with BMP7. As to quaternary structure, interacts with FZD4 (via FZ domain); competes with WNT2B for binding to FZD4, inhibiting Wnt signaling and repressing peripheral eye development. Interacts with BMP4; shows weaker interaction with BMP4 than isoform 1. Interacts with DVR1/VG1; the interaction is inhibited by BMP4. Interacts with BMP7. In terms of processing, N-glycosylated. As to expression, during embryonic development, expressed in the middle primitive streak and Hensen's node. Expressed in the peripheral region of the developing eye. Expressed in the presomitic mesoderm during somitogenesis in a NOTCH-dependent manner.

The protein localises to the secreted. Its function is as follows. Contributes to various developmental events through its interactions with multiple signaling pathways. Dorsalizing factor involved in the induction of Hensen's node by inhibiting bone morphogenetic proteins during gastrulation and by enhancing DVR1/VG1 activity. Wnt signaling inhibitor which competes with WNT2B for binding to Wnt receptor FZD4 and represses WNT2B-dependent development of the peripheral eye. Shows strong bone morphogenetic protein antagonistic activity. Functionally, shows weak bone morphogenetic protein antagonistic activity. The protein is Tsukushi (TSKU) of Gallus gallus (Chicken).